We begin with the raw amino-acid sequence, 423 residues long: Endochitinase 1 (423 aa).

The first 22 residues, 1–22, serve as a signal peptide directing secretion; that stretch reads MPSLFAQSLAIIATLQATLGLA. The region spanning 39–401 is the GH18 domain; the sequence is YVNAVYFTNW…GTSSNKLGGP (363 aa). N-linked (GlcNAc...) asparagine glycans are attached at residues N74, N78, and N96. Chitin contacts are provided by residues 103–104 and 130–133; these read GT and GGWT. Catalysis depends on E172, which acts as the Proton donor. Chitin-binding positions include Y173 and 238–241; that span reads MAYD. The N-linked (GlcNAc...) asparagine glycan is linked to N248. Residue W378 coordinates chitin. The disordered stretch occupies residues 380–423; sequence ASSDRSGSQSLIGTSSNKLGGPDSTENLLNYPDSKYDNMRKQMA. Residues 383-407 show a composition bias toward polar residues; sequence DRSGSQSLIGTSSNKLGGPDSTENL. The segment covering 413–423 has biased composition (basic and acidic residues); sequence SKYDNMRKQMA.

This sequence belongs to the glycosyl hydrolase 18 family. Chitinase class V subfamily.

The protein localises to the secreted. It carries out the reaction Random endo-hydrolysis of N-acetyl-beta-D-glucosaminide (1-&gt;4)-beta-linkages in chitin and chitodextrins.. Its function is as follows. Secreted chitinase involved in the degradation of chitin, a component of the cell walls of fungi and exoskeletal elements of some animals (including worms and arthropods). Participates in the infection process and directly acts in the penetration process of the host cuticle. This is Endochitinase 1 (chit1) from Metarhizium anisopliae (Entomophthora anisopliae).